A 262-amino-acid chain; its full sequence is Flap endonuclease Xni (262 aa).

Residue aspartate 112 participates in Mg(2+) binding. Residues 171–258 (QQLNDYWAIT…GFNLKDLRYT (88 aa)) form the 5'-3' exonuclease domain. Isoleucine 179, valine 190, and isoleucine 193 together coordinate K(+). The tract at residues 192-197 (GIGSKG) is interaction with DNA.

This sequence belongs to the Xni family. Requires Mg(2+) as cofactor. It depends on K(+) as a cofactor.

In terms of biological role, has flap endonuclease activity. During DNA replication, flap endonucleases cleave the 5'-overhanging flap structure that is generated by displacement synthesis when DNA polymerase encounters the 5'-end of a downstream Okazaki fragment. This chain is Flap endonuclease Xni, found in Psychromonas ingrahamii (strain DSM 17664 / CCUG 51855 / 37).